A 717-amino-acid chain; its full sequence is Cell division cycle protein 27 homolog A (717 aa).

A compositionally biased stretch (polar residues) spans 198 to 208; it reads TEHIPGENQQD. Disordered regions lie at residues 198 to 217, 282 to 315, and 342 to 374; these read TEHI…QPGD, LSAE…KDSH, and SKEA…SPDR. Residues 293-304 are compositionally biased toward basic residues; the sequence is RRSARIAARKKN. Positions 342–356 are enriched in polar residues; sequence SKEATTSGQSVSDIG. TPR repeat units lie at residues 421–454, 489–522, 524–556, 557–590, 592–624, 625–658, and 659–692; these read HWVL…YPYA, PESW…NERF, YAHT…DTRH, YNAW…NPRS, VIMC…DAKN, PLPK…APQE, and SSVH…SPSP.

Belongs to the APC3/CDC27 family. In terms of assembly, the APC/C is composed of at least 10 subunits. Interacts with APC2 and APC10.

The protein resides in the nucleus. It functions in the pathway protein modification; protein ubiquitination. Its function is as follows. Component of the anaphase promoting complex/cyclosome (APC/C), a cell cycle-regulated E3 ubiquitin-protein ligase complex that controls progression through mitosis and the G1 phase of the cell cycle. The APC/C complex controls several key steps in the cell cycle by mediating ubiquitination and subsequent degradation of target proteins such as cyclins. The APC/C complex is required for the female gametophyte development and is involved in several aspect of development by controlling cell division and cell elongation. Involved in the control of endoreduplication. Functionally redundant with CDC27B in the control of gametophyte development. The chain is Cell division cycle protein 27 homolog A (CDC27A) from Arabidopsis thaliana (Mouse-ear cress).